The sequence spans 141 residues: Hemoglobin subunit alpha (141 aa).

A disordered region spans residues 1–22; the sequence is VLSEDDKNRVRTSVGKNPELPG. The Globin domain occupies 1-141; the sequence is VLSEDDKNRV…VSEVLESKYR (141 aa). His-58 provides a ligand contact to O2. A heme b-binding site is contributed by His-87.

Belongs to the globin family. Heterotetramer of two alpha chains and two beta chains. As to expression, red blood cells.

Involved in oxygen transport from the lung to the various peripheral tissues. This Vipera aspis (Aspic viper) protein is Hemoglobin subunit alpha (HBA).